Reading from the N-terminus, the 248-residue chain is Phosphoribosylaminoimidazole-succinocarboxamide synthase (248 aa).

The protein belongs to the SAICAR synthetase family.

The enzyme catalyses 5-amino-1-(5-phospho-D-ribosyl)imidazole-4-carboxylate + L-aspartate + ATP = (2S)-2-[5-amino-1-(5-phospho-beta-D-ribosyl)imidazole-4-carboxamido]succinate + ADP + phosphate + 2 H(+). Its pathway is purine metabolism; IMP biosynthesis via de novo pathway; 5-amino-1-(5-phospho-D-ribosyl)imidazole-4-carboxamide from 5-amino-1-(5-phospho-D-ribosyl)imidazole-4-carboxylate: step 1/2. In Methanothermobacter thermautotrophicus (strain ATCC 29096 / DSM 1053 / JCM 10044 / NBRC 100330 / Delta H) (Methanobacterium thermoautotrophicum), this protein is Phosphoribosylaminoimidazole-succinocarboxamide synthase (purC).